A 199-amino-acid polypeptide reads, in one-letter code: HTH-type transcriptional regulator BetI (199 aa).

An HTH tetR-type domain is found at 8 to 68 (EIRKPQLVKA…ETMREILRQL (61 aa)). The segment at residues 31-50 (SISLISKEAGVSTGIINHYF) is a DNA-binding region (H-T-H motif).

It participates in amine and polyamine biosynthesis; betaine biosynthesis via choline pathway [regulation]. Functionally, repressor involved in the biosynthesis of the osmoprotectant glycine betaine. It represses transcription of the choline transporter BetT and the genes of BetAB involved in the synthesis of glycine betaine. The sequence is that of HTH-type transcriptional regulator BetI from Vibrio campbellii (strain ATCC BAA-1116).